A 382-amino-acid polypeptide reads, in one-letter code: Lipid-A-disaccharide synthase (382 aa).

It belongs to the LpxB family.

The catalysed reaction is 2-N,3-O-bis[(3R)-3-hydroxytetradecanoyl]-alpha-D-glucosaminyl 1-phosphate + UDP-2-N,3-O-bis[(3R)-3-hydroxytetradecanoyl]-alpha-D-glucosamine = lipid A disaccharide (E. coli) + UDP + H(+). It carries out the reaction a lipid X + a UDP-2-N,3-O-bis[(3R)-3-hydroxyacyl]-alpha-D-glucosamine = a lipid A disaccharide + UDP + H(+). The protein operates within glycolipid biosynthesis; lipid IV(A) biosynthesis; lipid IV(A) from (3R)-3-hydroxytetradecanoyl-[acyl-carrier-protein] and UDP-N-acetyl-alpha-D-glucosamine: step 5/6. Functionally, condensation of UDP-2,3-diacylglucosamine and 2,3-diacylglucosamine-1-phosphate to form lipid A disaccharide, a precursor of lipid A, a phosphorylated glycolipid that anchors the lipopolysaccharide to the outer membrane of the cell. The sequence is that of Lipid-A-disaccharide synthase from Escherichia coli O17:K52:H18 (strain UMN026 / ExPEC).